The primary structure comprises 71 residues: ATP synthase subunit c 1 (71 aa).

2 consecutive transmembrane segments (helical) span residues 4 to 24 (FIGA…VGHV) and 46 to 66 (LFVG…IALL).

The protein belongs to the ATPase C chain family. As to quaternary structure, F-type ATPases have 2 components, F(1) - the catalytic core - and F(0) - the membrane proton channel. F(1) has five subunits: alpha(3), beta(3), gamma(1), delta(1), epsilon(1). F(0) has four main subunits: a(1), b(1), b'(1) and c(10-14). The alpha and beta chains form an alternating ring which encloses part of the gamma chain. F(1) is attached to F(0) by a central stalk formed by the gamma and epsilon chains, while a peripheral stalk is formed by the delta, b and b' chains.

The protein localises to the cell inner membrane. In terms of biological role, f(1)F(0) ATP synthase produces ATP from ADP in the presence of a proton or sodium gradient. F-type ATPases consist of two structural domains, F(1) containing the extramembraneous catalytic core and F(0) containing the membrane proton channel, linked together by a central stalk and a peripheral stalk. During catalysis, ATP synthesis in the catalytic domain of F(1) is coupled via a rotary mechanism of the central stalk subunits to proton translocation. Key component of the F(0) channel; it plays a direct role in translocation across the membrane. A homomeric c-ring of between 10-14 subunits forms the central stalk rotor element with the F(1) delta and epsilon subunits. This chain is ATP synthase subunit c 1, found in Cereibacter sphaeroides (strain ATCC 17029 / ATH 2.4.9) (Rhodobacter sphaeroides).